Here is a 713-residue protein sequence, read N- to C-terminus: Meiotic activator RIM4 (713 aa).

Residues 1–90 (MKTEISTADS…TSTSTESRGR (90 aa)) are disordered. Positions 21 to 31 (ADSELVIREDI) are enriched in basic and acidic residues. Over residues 50-71 (GEDSDTDSDNFLQDPEDDVDEE) the composition is skewed to acidic residues. The span at 74–90 (GRGTVTTTSTSTESRGR) shows a compositional bias: low complexity. The RRM 1 domain occupies 93–172 (SCIFVASLAA…RRLRCEPAKV (80 aa)). The tract at residues 276–337 (HQNNGIINND…SDGIYDDEDK (62 aa)) is disordered. Residues 278 to 298 (NNGIINNDGSNNNDNNNSNNN) show a composition bias toward low complexity. The segment covering 299 to 327 (NREDSRRNGDVIEEECGHVHGSDSEEKLT) has biased composition (basic and acidic residues). The RRM 2 domain occupies 346–420 (RSIFVGQLDK…KTMHVQYKEV (75 aa)). Residues 524–609 (KSMPNSWSSP…KRYARRSSYG (86 aa)) are disordered. S525 carries the phosphoserine modification. The span at 526 to 546 (MPNSWSSPSSKSVNSENESVN) shows a compositional bias: low complexity. Residues 563 to 574 (GRYNAANSFTTY) show a composition bias toward polar residues. Residues 575-594 (NNSSAGNSNNNNNNNNSNSN) show a composition bias toward low complexity.

Polyubiquitinated by RSP5.

In terms of biological role, positive regulator of sporulation-specific genes and of sporulation. Required for premeiotic DNA synthesis and meiotic chromosomal segregation. May act in a nutritional signaling pathway. This chain is Meiotic activator RIM4 (RIM4), found in Saccharomyces cerevisiae (strain ATCC 204508 / S288c) (Baker's yeast).